The primary structure comprises 182 residues: Transcription antitermination protein NusB (182 aa).

Residues 159-182 (TPVENSEAEAAGYPVEESIEEDSQ) form a disordered region.

The protein belongs to the NusB family.

In terms of biological role, involved in transcription antitermination. Required for transcription of ribosomal RNA (rRNA) genes. Binds specifically to the boxA antiterminator sequence of the ribosomal RNA (rrn) operons. The chain is Transcription antitermination protein NusB from Corynebacterium diphtheriae (strain ATCC 700971 / NCTC 13129 / Biotype gravis).